The following is a 470-amino-acid chain: Glutathione reductase (470 aa).

S16 and G17 together coordinate FAD. S16 contacts glutathione. R23 contributes to the glutathione binding site. FAD contacts are provided by E36, T43, C44, and K52. C44 and C49 are oxidised to a cystine. Position 104 (Y104) interacts with glutathione. A120 serves as a coordination point for FAD. Residues G190, I193, E196, R213, and R219 each contribute to the NADP(+) site. T228 contacts glutathione. An NADP(+)-binding site is contributed by G280. D321 lines the FAD pocket. An NADP(+)-binding site is contributed by E327. FAD is bound at residue T329. A glutathione-binding site is contributed by R337. Residue A362 participates in NADP(+) binding. K412 is a binding site for glutathione. H459 contributes to the FAD binding site. H459 (proton acceptor) is an active-site residue.

It belongs to the class-I pyridine nucleotide-disulfide oxidoreductase family. In terms of assembly, homodimer. The cofactor is FAD.

The protein resides in the cytoplasm. It is found in the mitochondrion. It carries out the reaction 2 glutathione + NADP(+) = glutathione disulfide + NADPH + H(+). Catalyzes the reduction of glutathione disulfide (GSSG) to reduced glutathione (GSH). Constitutes the major mechanism to maintain a high GSH:GSSG ratio in the cytosol. The protein is Glutathione reductase (GLR1) of Yarrowia lipolytica (strain CLIB 122 / E 150) (Yeast).